The sequence spans 206 residues: Glutathione S-transferase class-mu 28 kDa isozyme (206 aa).

The region spanning Val1 to Gly81 is the GST N-terminal domain. Glutathione contacts are provided by residues Tyr5, Tyr5 to Phe6, Arg11, Trp36 to Lys40, Leu48, Ile50 to Val51, and Glu65 to Ser66. Residues Thr83–Phe206 form the GST C-terminal domain.

It belongs to the GST superfamily. Mu family. Homodimer.

It catalyses the reaction RX + glutathione = an S-substituted glutathione + a halide anion + H(+). Conjugation of reduced glutathione to a wide number of exogenous and endogenous hydrophobic electrophiles. Functionally, GST isoenzymes appear to play a central role in the parasite detoxification system. Other functions are also suspected including a role in increasing the solubility of haematin in the parasite gut. This Schistosoma japonicum (Blood fluke) protein is Glutathione S-transferase class-mu 28 kDa isozyme.